The primary structure comprises 1050 residues: Calmodulin-binding transcription activator 2 (1050 aa).

Residues 15-141 (IKQLLSEAQH…YLEVKGNRMS (127 aa)) constitute a DNA-binding region (CG-1). Polar residues-rich tracts occupy residues 141–171 (STSG…SSIL) and 183–196 (SRQA…NPEP). Disordered stretches follow at residues 141–196 (STSG…NPEP) and 223–246 (NRDG…SGDV). ANK repeat units lie at residues 661-690 (DGQG…SINF) and 694-723 (NGWS…DAGA). IQ domains lie at 870–899 (VHAA…RIVK) and 893–922 (IRQR…SVGL). The calmodulin-binding stretch occupies residues 918–940 (WSVGLLEKIILRWRRKGSGLRGF). Positions 957 to 985 (QEDDYDFLKEGRKQTEERLQKALTRVKSM) form a coiled coil. At Ser984 the chain carries Phosphoserine.

The protein belongs to the CAMTA family. Expressed in roots, stems, old leaves, petals, sepals, top of carpels, stigmas, stamen filaments, anthers and siliques, but not in pollen.

It is found in the nucleus. Functionally, transcription activator that binds to the DNA consensus sequence 5'-[ACG]CGCG[GTC]-3'. Regulates transcriptional activity in response to calcium signals. Binds calmodulin in a calcium-dependent manner. Involved in freezing tolerance in association with CAMTA1 and CAMTA3. Contributes together with CAMTA1 and CAMTA3 to the positive regulation of the cold-induced expression of DREB1A/CBF3, DREB1B/CBF1 and DREB1C/CBF2. Involved together with CAMTA3 and CAMTA4 in the positive regulation of a general stress response. Involved in tolerance to aluminum. Binds to the promoter of ALMT1 transporter and contributes to the positive regulation of aluminum-induced expression of ALMT1. The chain is Calmodulin-binding transcription activator 2 from Arabidopsis thaliana (Mouse-ear cress).